The primary structure comprises 462 residues: ATP synthase subunit beta (462 aa).

151-158 serves as a coordination point for ATP; the sequence is GGAGVGKT.

This sequence belongs to the ATPase alpha/beta chains family. In terms of assembly, F-type ATPases have 2 components, CF(1) - the catalytic core - and CF(0) - the membrane proton channel. CF(1) has five subunits: alpha(3), beta(3), gamma(1), delta(1), epsilon(1). CF(0) has four main subunits: a(1), b(1), b'(1) and c(9-12).

The protein resides in the cell inner membrane. It carries out the reaction ATP + H2O + 4 H(+)(in) = ADP + phosphate + 5 H(+)(out). Produces ATP from ADP in the presence of a proton gradient across the membrane. The catalytic sites are hosted primarily by the beta subunits. This chain is ATP synthase subunit beta, found in Chlorobium phaeovibrioides (strain DSM 265 / 1930) (Prosthecochloris vibrioformis (strain DSM 265)).